A 261-amino-acid polypeptide reads, in one-letter code: NAD-capped RNA hydrolase NudC (261 aa).

Arg74 contributes to the substrate binding site. Zn(2+)-binding residues include Cys103, Cys106, Cys121, and Cys124. Tyr129 is a binding site for substrate. In terms of domain architecture, Nudix hydrolase spans 130 to 253; sequence PRIFPCIIVA…TIARALIEQT (124 aa). Residues Ala163, Glu179, and Glu183 each contribute to the a divalent metal cation site. Residues 164–185 carry the Nudix box motif; that stretch reads GFVEVGETLEQCVAREVKEETG. 197–204 lines the substrate pocket; that stretch reads QPWAFPSS. Position 224 (Glu224) interacts with a divalent metal cation. Ala246 serves as a coordination point for substrate.

This sequence belongs to the Nudix hydrolase family. NudC subfamily. As to quaternary structure, homodimer. It depends on Mg(2+) as a cofactor. Mn(2+) is required as a cofactor. The cofactor is Zn(2+).

It catalyses the reaction a 5'-end NAD(+)-phospho-ribonucleoside in mRNA + H2O = a 5'-end phospho-adenosine-phospho-ribonucleoside in mRNA + beta-nicotinamide D-ribonucleotide + 2 H(+). The catalysed reaction is NAD(+) + H2O = beta-nicotinamide D-ribonucleotide + AMP + 2 H(+). The enzyme catalyses NADH + H2O = reduced beta-nicotinamide D-ribonucleotide + AMP + 2 H(+). In terms of biological role, mRNA decapping enzyme that specifically removes the nicotinamide adenine dinucleotide (NAD) cap from a subset of mRNAs by hydrolyzing the diphosphate linkage to produce nicotinamide mononucleotide (NMN) and 5' monophosphate mRNA. The NAD-cap is present at the 5'-end of some mRNAs and stabilizes RNA against 5'-processing. Has preference for mRNAs with a 5'-end purine. Catalyzes the hydrolysis of a broad range of dinucleotide pyrophosphates. In Vibrio vulnificus (strain CMCP6), this protein is NAD-capped RNA hydrolase NudC.